The primary structure comprises 487 residues: Cysteine--tRNA ligase (487 aa).

Zn(2+) is bound at residue cysteine 29. The short motif at 31–41 (VTVYDVNHVGH) is the 'HIGH' region element. Zn(2+) is bound by residues cysteine 209, histidine 234, and glutamate 238. The 'KMSKS' region signature appears at 266–270 (KMSKS). Lysine 269 serves as a coordination point for ATP.

Belongs to the class-I aminoacyl-tRNA synthetase family. Monomer. It depends on Zn(2+) as a cofactor.

The protein resides in the cytoplasm. It carries out the reaction tRNA(Cys) + L-cysteine + ATP = L-cysteinyl-tRNA(Cys) + AMP + diphosphate. This Persephonella marina (strain DSM 14350 / EX-H1) protein is Cysteine--tRNA ligase.